A 99-amino-acid polypeptide reads, in one-letter code: Duplicate procyclin (99 aa).

In Trypanosoma brucei brucei, this protein is Duplicate procyclin.